The primary structure comprises 655 residues: Very long-chain specific acyl-CoA dehydrogenase, mitochondrial (655 aa).

Residues 1–40 constitute a mitochondrion transit peptide; sequence MQAARMAASLGRQLLRLGGGSSRLTALLGQPRPGPARRPY. Residues 23–42 are disordered; that stretch reads RLTALLGQPRPGPARRPYAG. Residues 41 to 482 form a catalytic region; the sequence is AGGAAQLALD…ALQGCMDKGK (442 aa). Lys51 is subject to N6-acetyllysine. Lys71 carries the N6-acetyllysine; alternate modification. Lys71 is subject to N6-succinyllysine; alternate. Lys195 carries the N6-succinyllysine modification. 214 to 223 is a binding site for FAD; sequence FCLTEPSSGS. Cys237 is modified (S-nitrosocysteine). Position 239 is an N6-acetyllysine; alternate (Lys239). Residue Lys239 is modified to N6-succinyllysine; alternate. 249–251 contacts FAD; the sequence is WIS. An N6-acetyllysine; alternate mark is found at Lys276 and Lys278. Residues Lys276 and Lys278 each carry the N6-succinyllysine; alternate modification. N6-acetyllysine is present on Lys298. Lys331 is modified (N6-acetyllysine; alternate). Lys331 is subject to N6-succinyllysine; alternate. Lys372 is subject to N6-succinyllysine. 461 to 463 serves as a coordination point for substrate; that stretch reads FEG. The active-site Proton acceptor is Glu462. 464 to 466 contributes to the FAD binding site; the sequence is TND. Lys482 is modified (N6-acetyllysine; alternate). Lys482 is modified (N6-succinyllysine; alternate). Positions 483–516 are membrane-anchoring; it reads ELSGLGSALKNPFGNAGLLLGEAGKQLRRRAGLG. Residues Ser517 and Ser522 each carry the phosphoserine modification. Lys550 is subject to N6-acetyllysine. N6-acetyllysine; alternate is present on Lys556. At Lys556 the chain carries N6-succinyllysine; alternate. Gln562 lines the FAD pocket. Lys639 is modified (N6-succinyllysine).

The protein belongs to the acyl-CoA dehydrogenase family. Homodimer. Homodimerizes after import into the mitochondrion. FAD is required as a cofactor. In terms of processing, S-nitrosylation at Cys-237 in liver improves catalytic efficiency. In terms of tissue distribution, predominantly expressed in heart and skeletal muscle (at protein level). Also detected in kidney and liver (at protein level).

Its subcellular location is the mitochondrion inner membrane. It carries out the reaction a very-long-chain 2,3-saturated fatty acyl-CoA + oxidized [electron-transfer flavoprotein] + H(+) = a very-long-chain (2E)-enoyl-CoA + reduced [electron-transfer flavoprotein]. The catalysed reaction is decanoyl-CoA + oxidized [electron-transfer flavoprotein] + H(+) = (2E)-decenoyl-CoA + reduced [electron-transfer flavoprotein]. The enzyme catalyses dodecanoyl-CoA + oxidized [electron-transfer flavoprotein] + H(+) = (2E)-dodecenoyl-CoA + reduced [electron-transfer flavoprotein]. It catalyses the reaction tetradecanoyl-CoA + oxidized [electron-transfer flavoprotein] + H(+) = (2E)-tetradecenoyl-CoA + reduced [electron-transfer flavoprotein]. It carries out the reaction oxidized [electron-transfer flavoprotein] + hexadecanoyl-CoA + H(+) = (2E)-hexadecenoyl-CoA + reduced [electron-transfer flavoprotein]. The catalysed reaction is octadecanoyl-CoA + oxidized [electron-transfer flavoprotein] + H(+) = (2E)-octadecenoyl-CoA + reduced [electron-transfer flavoprotein]. The enzyme catalyses eicosanoyl-CoA + oxidized [electron-transfer flavoprotein] + H(+) = (2E)-eicosenoyl-CoA + reduced [electron-transfer flavoprotein]. It catalyses the reaction docosanoyl-CoA + oxidized [electron-transfer flavoprotein] + H(+) = (2E)-docosenoyl-CoA + reduced [electron-transfer flavoprotein]. It carries out the reaction tetracosanoyl-CoA + oxidized [electron-transfer flavoprotein] + H(+) = (2E)-tetracosenoyl-CoA + reduced [electron-transfer flavoprotein]. The catalysed reaction is (9Z)-hexadecenoyl-CoA + oxidized [electron-transfer flavoprotein] + H(+) = (2E,9Z)-hexadecadienoyl-CoA + reduced [electron-transfer flavoprotein]. The enzyme catalyses oxidized [electron-transfer flavoprotein] + (9Z)-octadecenoyl-CoA + H(+) = (2E,9Z)-octadecadienoyl-CoA + reduced [electron-transfer flavoprotein]. It functions in the pathway lipid metabolism; mitochondrial fatty acid beta-oxidation. Functionally, very long-chain specific acyl-CoA dehydrogenase is one of the acyl-CoA dehydrogenases that catalyze the first step of mitochondrial fatty acid beta-oxidation, an aerobic process breaking down fatty acids into acetyl-CoA and allowing the production of energy from fats. The first step of fatty acid beta-oxidation consists in the removal of one hydrogen from C-2 and C-3 of the straight-chain fatty acyl-CoA thioester, resulting in the formation of trans-2-enoyl-CoA. Among the different mitochondrial acyl-CoA dehydrogenases, very long-chain specific acyl-CoA dehydrogenase acts specifically on acyl-CoAs with saturated 12 to 24 carbons long primary chains. This Homo sapiens (Human) protein is Very long-chain specific acyl-CoA dehydrogenase, mitochondrial.